A 469-amino-acid chain; its full sequence is MADPTSKDDHDGEGGRDKSSTFVQKLIDVEEAKTQIIYSLPMIFTNLFYYCIPLTSVMFASQLGQLELAGATLANSWATVTGFAFMTGLSGALETLCGQGFGAKSYRMLGIHLQSSCIVSLVFTILITILWFFTESVFLLLRQDPSISKQAALYMKYLAPGLLAYGFLQNILRFCQTQCIVTPLVLFSFLPLVINIGTTYALVHLAGLGFIGAPIATSISLWIAFVSLGFYVICSDKFKETWTGFSMESFHHVVLNLTLSIPSAAMVCLEYWAFEILVFLAGLMRNPEITTSLVAICVNTESISYMLTCGLSAATSTRVSNELGAGNVKGAKKATSVSVKLSLVLALGVVIAILVGHDAWVGLFSNSHVIKEGFASLRFFLAASITLDSIQGVLSGVARGCGWQRLATVINLGTFYLIGMPISVLCGFKLKLHAKGLWIGLICGMFCQSASLLLMTIFRKWTKLTAATV.

A run of 12 helical transmembrane segments spans residues 40-60 (LPMI…VMFA), 73-93 (LANS…SGAL), 121-141 (LVFT…FLLL), 152-172 (ALYM…QNIL), 183-203 (PLVL…YALV), 206-226 (AGLG…IAFV), 252-274 (HVVL…YWAF), 293-313 (LVAI…GLSA), 344-364 (VLAL…VGLF), 374-394 (FASL…QGVL), 406-426 (LATV…SVLC), and 438-458 (WIGL…MTIF).

It belongs to the multi antimicrobial extrusion (MATE) (TC 2.A.66.1) family.

The protein resides in the membrane. This chain is Protein DETOXIFICATION 18, found in Arabidopsis thaliana (Mouse-ear cress).